The primary structure comprises 118 residues: Large ribosomal subunit protein uL23c (118 aa).

It belongs to the universal ribosomal protein uL23 family. Part of the 50S ribosomal subunit.

It is found in the plastid. The protein resides in the chloroplast. In terms of biological role, binds to 23S rRNA. This chain is Large ribosomal subunit protein uL23c (rpl23), found in Stigeoclonium helveticum (Green alga).